Consider the following 1902-residue polypeptide: MATRRAIVPEQQQEPSSPASEISKNKDWQEQSEMVSPTEEEGFCWPGPKSVALRRASEGFGFTLRHFIVYPPESAVHTSVKDEENGNRGVNAGRPRNRLEPMDTIFVKQVKEGGPAHEAGLCTGDRIIKVNGESVIGKTYSQVIALIQNSDSTLELSVMPKDEDILQLAYSQDAYLKGNDSYSGNAQNIPEPPPLCYPRVQPEASVMAQPVEVLPSGTSLATQQSSCPLRTATTQPERSYRVEIQVPPSPTDIVKSNTAVCVCNEAVRTVIVPSEKVVDLSSNRTNRAGPLHRTGLADPSILKRTTSPSSSTPNVPMVPSTRHFDSAGVIGKPPSYGGLAENMFSTRPAAHAEESPSPTNHYASPGSHQHIDWRDYKTYKEYIDNRRMLMYGCRTIQERLDSLRAASQNTTDYNQMLPNRSSGQVRRRSTSHDRVPQSAQMRKRSVSQERLEDPVLMKEWPRSASQDTLTSPAVASRNHRSELWDYLTRKGDFDQFIVETHSNGERNTNYQWSGFTEQDDRRGINERPRQHAFHMSLRSPNFTMAPVPFTSSDNRRGGARVLASAHPLQMVHPDMKTIQPTRNFQNSSRAPHPRPALSDRSGFAISKSNSVKIPTPYAAKPHSPSVRSDDGIVRDQKPVNYLHVGGPQNCQRKTQTESALGFHLDSIKTSMSASSSSPSTSQKVDVKITQSPEANAGDSNAVLSPVDQVVLRERPSPGQQTSPPIRQQSYIFAVNEQEGASDTTCWLPNDARREVHIKRIEQRKASGSNSPGDSLASIPFIDEPTSPSIDHEIGNIPASAVISISAQPLPTITTVPPSPTSPVPLMRRHFSHDHDSIRPIVLEVNSKTERSKSCDEGLDDYKEDGKLCLKQGSSLKGIKARENVQSSEDSESRKDSSSDVFSDSNKEGFLYFRQLTTEKGKRVSGSIRPWKQMYVVLRGSALYLQKDKKEQTGHSSAQSDEEQLIGINGCLIDISYSETKRKNVFRLTTSDREFLFQAEDRDDMLAWIKAIQENGNLNDEQTDQASRVLISKRIKEYNTMMSSSSNKTEPSPKAQRQTLSIRQQFRAGKPDDDISPPKDKGSWRRIMKKPFEKKPTTGGTFGVRLDDCPPAHNNKYVPLIVDVCCKLVEDRGLETTGIYRVPGNNAAISSMQEELNKGNTDIDIQDDKWRDLNVISSLLKSFFRKLPDPLFTNEKYNDFIEANRKEDPVERLKTLKRLILDLPDHHYETLKYLSAHLKTVADSSEKNKMEPRNLAIVFGPTLVRTSEDNMTHMVTHMPDQYKIVETLIQKHDWFFSEESADEPITTVHEESTVESQPVPNIDHLLPNIGRTGLSPGDVSDSATSDSAKSKGSWGSGKDQYSRELLVSSLFAAASRKRKKQKDKPQPSSSEDELDNVFYQKELSQVEFQKPDKQNVDKDMDLKAKANALSLKDADNVKGTNIIKEDKLEKDIMYSEPTSPCPPKLLEPPIANHGLQAPSNDKNIPQINFQMEESMSDSGTMLSTSSQASVQGSKPKVVSPEFKGSDFLTADVSSITSDYSTTSSTIYMTGLDSILISPEVQSVAESKGEEADDERSELVSEGRPMETDSENDFPIFASSLAFDRRHQSKAEEPSRNVQVNSEGSPSCTEGSITPKMDRRRFSSHKLIECDTLSRKKSVQQKTDSDCSAESKTEETLSDAQEAVKKGRSLSIVDPTGNNEPEEPAWRIKITERLKLRLKASADDMFGIGSQKANAAETRKKKNIRRRHTLGGHRDFAEISVLNAWKINEPSSKEAELSAVDRLKPKCPSQDLSISEWLVRERLRTSTSELSTVEPEEKHISETTGQKESASASPPPSSPSQVSTAVLPAGSDSPSHETAPQPDDQMNGDSFQSKNKNNFSPAVDAHPHKLSGTQVVRSRFYQYL.

Disordered regions lie at residues 1-44 (MATR…EGFC), 78-97 (TSVK…RPRN), 284-317 (RTNR…NVPM), 348-369 (PAAH…GSHQ), 409-450 (NTTD…SQER), 581-603 (TRNF…RSGF), 613-632 (IPTP…DDGI), and 879-902 (KARE…DVFS). Over residues 10–22 (EQQQEPSSPASEI) the composition is skewed to polar residues. Positions 77–162 (HTSVKDEENG…TLELSVMPKD (86 aa)) constitute a PDZ domain. A compositionally biased stretch (low complexity) spans 305–317 (TTSPSSSTPNVPM). Positions 409-424 (NTTDYNQMLPNRSSGQ) are enriched in polar residues. One can recognise a PH domain in the interval 903–1016 (DSNKEGFLYF…WIKAIQENGN (114 aa)). Positions 1039 to 1063 (TMMSSSSNKTEPSPKAQRQTLSIRQ) are enriched in polar residues. The tract at residues 1039–1095 (TMMSSSSNKTEPSPKAQRQTLSIRQQFRAGKPDDDISPPKDKGSWRRIMKKPFEKKP) is disordered. Residues 1068–1082 (GKPDDDISPPKDKGS) show a composition bias toward basic and acidic residues. One can recognise a Rho-GAP domain in the interval 1103 to 1295 (VRLDDCPPAH…TLIQKHDWFF (193 aa)). Disordered regions lie at residues 1306–1357 (TVHE…GSGK), 1375–1394 (RKRK…DELD), 1494–1520 (MSDS…VSPE), 1559–1704 (VQSV…EPAW), 1729–1748 (QKAN…RHTL), and 1803–1890 (TSTS…KLSG). Residues 1339–1357 (SDSATSDSAKSKGSWGSGK) are compositionally biased toward low complexity. A compositionally biased stretch (polar residues) spans 1494–1511 (MSDSGTMLSTSSQASVQG). Basic and acidic residues-rich tracts occupy residues 1575–1585 (SELVSEGRPME) and 1601–1613 (FDRR…EEPS). Residues 1614–1630 (RNVQVNSEGSPSCTEGS) are compositionally biased toward polar residues. 2 stretches are compositionally biased toward basic and acidic residues: residues 1634–1652 (KMDR…DTLS) and 1661–1673 (TDSD…KTEE). The span at 1737–1748 (RKKKNIRRRHTL) shows a compositional bias: basic residues. Residues 1865 to 1878 (NGDSFQSKNKNNFS) are compositionally biased toward polar residues.

The protein resides in the golgi apparatus membrane. It localises to the cell junction. The protein localises to the cytoplasmic vesicle membrane. Its subcellular location is the cytoplasm. It is found in the cytoskeleton. In terms of biological role, GTPase-activating protein (GAP) for rhoa and cdc42. This chain is Rho GTPase-activating protein 21-B (arhgap21-b), found in Xenopus laevis (African clawed frog).